A 446-amino-acid polypeptide reads, in one-letter code: WD repeat domain phosphoinositide-interacting protein 1 (446 aa).

The Nuclear receptor interaction signature appears at 131 to 136 (LLKTVL). One copy of the WD 1 repeat lies at 184–224 (AHEGTLAAITFNSSGSKLASASEKGTVIRVFSVPEGQKLYE). Positions 225 to 228 (FRRG) match the L/FRRG motif motif. 2 WD repeats span residues 230–269 (KRYV…DSRP) and 312–351 (SGQK…GGEC). A disordered region spans residues 386–406 (ARPSTSAASTVPGYSEDGGAL).

This sequence belongs to the WD repeat PROPPIN family. Interacts with androgen receptor (AR) and the estrogen receptors ESR1 and ESR2. Interacts with WIPI2. Interacts with WDR45. Interacts with ATG16L1. May interact with NUDC.

The protein localises to the golgi apparatus. The protein resides in the trans-Golgi network. Its subcellular location is the endosome. It localises to the cytoplasmic vesicle. It is found in the clathrin-coated vesicle. The protein localises to the preautophagosomal structure membrane. The protein resides in the cytoplasm. Its subcellular location is the cytoskeleton. In terms of biological role, component of the autophagy machinery that controls the major intracellular degradation process by which cytoplasmic materials are packaged into autophagosomes and delivered to lysosomes for degradation. Plays an important role in starvation- and calcium-mediated autophagy, as well as in mitophagy. Functions downstream of the ULK1 and PI3-kinases that produce phosphatidylinositol 3-phosphate (PtdIns3P) on membranes of the endoplasmic reticulum once activated. Binds phosphatidylinositol 3-phosphate (PtdIns3P), and maybe other phosphoinositides including PtdIns3,5P2 and PtdIns5P, and is recruited to phagophore assembly sites at the endoplasmic reticulum membranes. There, it assists WIPI2 in the recruitment of ATG12-ATG5-ATG16L1, a complex that directly controls the elongation of the nascent autophagosomal membrane. Together with WDR45/WIPI4, promotes ATG2 (ATG2A or ATG2B)-mediated lipid transfer by enhancing ATG2-association with phosphatidylinositol 3-monophosphate (PI3P)-containing membranes. Involved in xenophagy of Staphylococcus aureus. Invading S.aureus cells become entrapped in autophagosome-like WIPI1 positive vesicles targeted for lysosomal degradation. Also plays a distinct role in controlling the transcription of melanogenic enzymes and melanosome maturation, a process that is distinct from starvation-induced autophagy. May also regulate the trafficking of proteins involved in the mannose-6-phosphate receptor (MPR) recycling pathway. This chain is WD repeat domain phosphoinositide-interacting protein 1 (Wipi1), found in Mus musculus (Mouse).